The primary structure comprises 832 residues: MATGYSTGVSPFDLDENNHNDSIHHRHQNHHSQSHDSSGERDDTEIEDIIQKTSKLNINTSTSTKIKNFFFQSSNRHDSSNSPPLREVFIKTINPLILTAISSFVRLYRIDVANSVVWDEAHFGKFGSQYLKRQFYFDVHPPLGKLLIGLSGYLADYDGNFDFESSNVYPDNVNYVFMRIFNCFFGILVTPLAYKTAVILGYNQFTCWLIAFMVIFEQLSLTLSKFILLDSMLLFFTVLTMYCLVKVHTLAIARVGSNSKTPLTKLEIKWYILTGISIGCVCSVKWVGLFVTALVGFYTIVDLWIKFYQTFAIDKKSPKKMSVVNYLIHWVVRIFTLIIIPMTIYVATFKVHFMVLNHTGPDDGTLSTLLQGSLIGNDLQSGPRSVAFGSLVTIRSQGLSPNLIHSHPHNYPQGSQEQQVTTYGFKDDNNEFLFEFGVDAGLRNQHATLENENSTRNGGNDDDYYHVIIHDGDTVRINHKNTGSYLRANAVGAPITSSSYEVSCFGDVESNDWADEWVIEIQSQDQSPDPMFQDEDPSEIHSVSTSFRLKHKQLGCYLATTGKSYPAWGYQQGEVVCKYSVFSRDKNTWWNIEKHVNNKLPLPATEYVPPKPKFWKEFILLNYAMMASNNALIPDPDRFDKLSSEWWEWPILNTGLRMNSWGDADIKYFLLGNPLITWISTIALIVCPLYLLVVGIKYQRQWILLSATDTSNANPANSQSLSLLAARALLPLAGWVLHYVPFILMGRVKYLHHYVPALYFAIFVAGFIVDAILNLDFSYHNNKFQYIFKVVIYSTLYLVICISFWYFKDLSFGMEGSSVDYRHLRLLGSWMI.

The interval 1–44 (MATGYSTGVSPFDLDENNHNDSIHHRHQNHHSQSHDSSGERDDT) is disordered. Residues Asn20 and Asn59 are each glycosylated (N-linked (GlcNAc...) asparagine). 7 helical membrane passes run 135–155 (FYFDVHPPLGKLLIGLSGYLA), 175–194 (YVFMRIFNCFFGILVTPLAY), 206–227 (TCWLIAFMVIFEQLSLTLSKFI), 232–252 (MLLFFTVLTMYCLVKVHTLAI), 266–286 (LEIKWYILTGISIGCVCSVKW), 293–311 (ALVGFYTIVDLWIKFYQTF), and 327–347 (LIHWVVRIFTLIIIPMTIYVA). An N-linked (GlcNAc...) asparagine glycan is attached at Asn357. The MIR 1 domain maps to 383–437 (PRSVAFGSLVTIRSQGLSPNLIHSHPHNYPQGSQEQQVTTYGFKDDNNEFLFEFG). Asn453 carries N-linked (GlcNAc...) asparagine glycosylation. MIR domains are found at residues 466–522 (HVII…IEIQ) and 537–595 (PSEI…IEKH). The next 4 helical transmembrane spans lie at 676–696 (ITWISTIALIVCPLYLLVVGI), 723–743 (LLAARALLPLAGWVLHYVPFI), 755–775 (VPALYFAIFVAGFIVDAILNL), and 787–807 (IFKVVIYSTLYLVICISFWYF).

It belongs to the glycosyltransferase 39 family.

It localises to the endoplasmic reticulum membrane. It catalyses the reaction a di-trans,poly-cis-dolichyl beta-D-mannosyl phosphate + L-seryl-[protein] = 3-O-(alpha-D-mannosyl)-L-seryl-[protein] + a di-trans,poly-cis-dolichyl phosphate + H(+). The enzyme catalyses a di-trans,poly-cis-dolichyl beta-D-mannosyl phosphate + L-threonyl-[protein] = 3-O-(alpha-D-mannosyl)-L-threonyl-[protein] + a di-trans,poly-cis-dolichyl phosphate + H(+). The protein operates within protein modification; protein glycosylation. Its function is as follows. Protein mannosyltransferase (PMT) involved in hyphal morphogenesis and drug sensitivity. Transfers mannose from Dol-P-mannose to Ser or Thr residues on proteins. PMT1, PMT2 and PMT4 account for most of the protein-O-glycosylation activity, while PMT5 and PMT6 may specifically modulate a much narrower spectrum of target proteins. Required for biofilm formation and virulence. In Candida albicans (strain SC5314 / ATCC MYA-2876) (Yeast), this protein is Dolichyl-phosphate-mannose--protein mannosyltransferase 6 (PMT6).